We begin with the raw amino-acid sequence, 525 residues long: Peptide chain release factor 3 (525 aa).

Residues 9–276 (AKRRTFAIIS…GFTRYAPAPQ (268 aa)) enclose the tr-type G domain. Residues 18–25 (SHPDAGKT), 86–90 (DTPGH), and 140–143 (NKFD) each bind GTP.

This sequence belongs to the TRAFAC class translation factor GTPase superfamily. Classic translation factor GTPase family. PrfC subfamily.

Its subcellular location is the cytoplasm. In terms of biological role, increases the formation of ribosomal termination complexes and stimulates activities of RF-1 and RF-2. It binds guanine nucleotides and has strong preference for UGA stop codons. It may interact directly with the ribosome. The stimulation of RF-1 and RF-2 is significantly reduced by GTP and GDP, but not by GMP. The chain is Peptide chain release factor 3 from Francisella tularensis subsp. novicida (strain U112).